The sequence spans 175 residues: Peptide deformylase (175 aa).

2 residues coordinate Fe cation: cysteine 94 and histidine 136. The active site involves glutamate 137. Histidine 140 contributes to the Fe cation binding site.

Belongs to the polypeptide deformylase family. The cofactor is Fe(2+).

The enzyme catalyses N-terminal N-formyl-L-methionyl-[peptide] + H2O = N-terminal L-methionyl-[peptide] + formate. Functionally, removes the formyl group from the N-terminal Met of newly synthesized proteins. Requires at least a dipeptide for an efficient rate of reaction. N-terminal L-methionine is a prerequisite for activity but the enzyme has broad specificity at other positions. This chain is Peptide deformylase, found in Brucella suis biovar 1 (strain 1330).